We begin with the raw amino-acid sequence, 250 residues long: UDP-2,3-diacylglucosamine hydrolase (250 aa).

Mn(2+)-binding residues include Asp-8, His-10, Asp-41, Asn-79, and His-114. Substrate is bound at residue Asn-79–Arg-80. Substrate-binding residues include Asp-122, Ser-160, Asp-172, Gln-175, and His-203. His-203 and His-205 together coordinate Mn(2+).

Belongs to the LpxH family. Requires Mn(2+) as cofactor.

The protein localises to the cell inner membrane. It catalyses the reaction UDP-2-N,3-O-bis[(3R)-3-hydroxytetradecanoyl]-alpha-D-glucosamine + H2O = 2-N,3-O-bis[(3R)-3-hydroxytetradecanoyl]-alpha-D-glucosaminyl 1-phosphate + UMP + 2 H(+). Its pathway is glycolipid biosynthesis; lipid IV(A) biosynthesis; lipid IV(A) from (3R)-3-hydroxytetradecanoyl-[acyl-carrier-protein] and UDP-N-acetyl-alpha-D-glucosamine: step 4/6. Hydrolyzes the pyrophosphate bond of UDP-2,3-diacylglucosamine to yield 2,3-diacylglucosamine 1-phosphate (lipid X) and UMP by catalyzing the attack of water at the alpha-P atom. Involved in the biosynthesis of lipid A, a phosphorylated glycolipid that anchors the lipopolysaccharide to the outer membrane of the cell. The protein is UDP-2,3-diacylglucosamine hydrolase of Xylella fastidiosa (strain M23).